A 158-amino-acid chain; its full sequence is NAD(P)H-quinone oxidoreductase subunit J, chloroplastic (158 aa).

This sequence belongs to the complex I 30 kDa subunit family. In terms of assembly, NDH is composed of at least 16 different subunits, 5 of which are encoded in the nucleus.

It localises to the plastid. It is found in the chloroplast thylakoid membrane. It catalyses the reaction a plastoquinone + NADH + (n+1) H(+)(in) = a plastoquinol + NAD(+) + n H(+)(out). The enzyme catalyses a plastoquinone + NADPH + (n+1) H(+)(in) = a plastoquinol + NADP(+) + n H(+)(out). NDH shuttles electrons from NAD(P)H:plastoquinone, via FMN and iron-sulfur (Fe-S) centers, to quinones in the photosynthetic chain and possibly in a chloroplast respiratory chain. The immediate electron acceptor for the enzyme in this species is believed to be plastoquinone. Couples the redox reaction to proton translocation, and thus conserves the redox energy in a proton gradient. This is NAD(P)H-quinone oxidoreductase subunit J, chloroplastic from Gossypium barbadense (Sea Island cotton).